A 65-amino-acid chain; its full sequence is Metallothionein (65 aa).

Belongs to the metallothionein superfamily. Type 4 family.

Functionally, metallothioneins have a high content of cysteine residues that bind various heavy metals. This is Metallothionein from Paracentrotus lividus (Common sea urchin).